The primary structure comprises 1480 residues: Tubulin-specific chaperone D (1480 aa).

2 disordered regions span residues 1–32 (MENS…SQQQ) and 453–476 (NNNN…EEIP). 2 stretches are compositionally biased toward low complexity: residues 7 to 32 (ISLN…SQQQ) and 453 to 463 (NNNNNNNNNEN). The segment covering 464–476 (NNEEGEEEEEEIP) has biased composition (acidic residues). Residues 482 to 520 (ILEEIMKSLKDKDTIIRWTSAKAIGRIVNLLPKDMGDQV) form an HEAT 1 repeat. The tract at residues 859–880 (KPIITPPSSKSTTNNNNNNNNN) is disordered. The stretch at 886–922 (EIAFNIILGYLNENLNHPNEEVQKEASKAFELLFSKY) is one HEAT 2 repeat. Residues 1437–1480 (NPHKQSDDNNNNNNGELINNNTENNNNNNFDDNLPEDSQDLMEI) form a disordered region. Residues 1444 to 1468 (DNNNNNNGELINNNTENNNNNNFDD) are compositionally biased toward low complexity. Residues 1469-1480 (NLPEDSQDLMEI) are compositionally biased toward acidic residues.

Belongs to the TBCD family. Supercomplex made of cofactors A to E. Cofactors A and D function by capturing and stabilizing tubulin in a quasi-native conformation. Cofactor E binds to the cofactor D-tubulin complex; interaction with cofactor C then causes the release of tubulin polypeptides that are committed to the native state.

Functionally, tubulin-folding protein; involved in the first step of the tubulin folding pathway. This chain is Tubulin-specific chaperone D (tbcd), found in Dictyostelium discoideum (Social amoeba).